The following is a 258-amino-acid chain: MSEASSPLKVWLERDGSLLRLRLARPKANIVDAAMIAAMRQALGEHLQAPALRAVLLDAEGPHFSFGASVDEHMPDQCAQMLKSLHGLVREMLDSPVPILVALRGQCLGGGLEVAAAGNLLFAAPDAKFGQPEIRLGVFAPAASCLLPPRVGQACAEDLLWSGRSIDGAEGHRIGLIDVLAEDPEAAALRWFDEHIARLSASSLRFAVRAARCDSVPRIKQKLDTVEALYLEELMASHDAVEGLKAFLEKRSANWENR.

Belongs to the enoyl-CoA hydratase/isomerase family.

The enzyme catalyses cyclohexa-1,5-diene-1-carbonyl-CoA + H2O = 6-hydroxycyclohex-1-ene-1-carbonyl-CoA. The protein operates within aromatic compound metabolism; benzoyl-CoA degradation. Functionally, catalyzes the hydration of cyclohexa-1,5-diene-1-carboxyl-CoA. The protein is Cyclohexa-1,5-dienecarbonyl-CoA hydratase (dch) of Thauera aromatica.